The chain runs to 113 residues: MEAKAIAKFIRVSPRKARMVVDLIRGKKVEEALAILRYTPNKAAAAVTKVVKSAAANAEHNNDMDKEELVVSQIFVDQGPSLKRMMPRAMGRADIIKRRTSHITVVVSDKKEG.

The protein belongs to the universal ribosomal protein uL22 family. In terms of assembly, part of the 50S ribosomal subunit.

Its function is as follows. This protein binds specifically to 23S rRNA; its binding is stimulated by other ribosomal proteins, e.g. L4, L17, and L20. It is important during the early stages of 50S assembly. It makes multiple contacts with different domains of the 23S rRNA in the assembled 50S subunit and ribosome. Functionally, the globular domain of the protein is located near the polypeptide exit tunnel on the outside of the subunit, while an extended beta-hairpin is found that lines the wall of the exit tunnel in the center of the 70S ribosome. The chain is Large ribosomal subunit protein uL22 from Desulforamulus reducens (strain ATCC BAA-1160 / DSM 100696 / MI-1) (Desulfotomaculum reducens).